The primary structure comprises 143 residues: MKFIILTCLLAVALAKQRMEQYISSEESMDNSQENFKQNMDVAFFPSQETVENIYIPQMESVEAPMKVSDIISQQQYNQKMMDMSVSAREKTVMTEESKNIQDYMNKMKRYSKITWPQFVKLLHQYQKTMTPWSYYPSTPSQV.

A signal peptide spans 1 to 15 (MKFIILTCLLAVALA).

Belongs to the alpha-casein family. As to expression, mammary gland specific. Secreted in milk.

It localises to the secreted. Important role in the capacity of milk to transport calcium phosphate. The polypeptide is Alpha-S2-casein-like B (Csn1s2b) (Mus musculus (Mouse)).